We begin with the raw amino-acid sequence, 561 residues long: DNA ligase B (561 aa).

Lys125 functions as the N6-AMP-lysine intermediate in the catalytic mechanism.

This sequence belongs to the NAD-dependent DNA ligase family. LigB subfamily.

It catalyses the reaction NAD(+) + (deoxyribonucleotide)n-3'-hydroxyl + 5'-phospho-(deoxyribonucleotide)m = (deoxyribonucleotide)n+m + AMP + beta-nicotinamide D-nucleotide.. Catalyzes the formation of phosphodiester linkages between 5'-phosphoryl and 3'-hydroxyl groups in double-stranded DNA using NAD as a coenzyme and as the energy source for the reaction. The protein is DNA ligase B of Salmonella gallinarum (strain 287/91 / NCTC 13346).